The following is a 180-amino-acid chain: Large ribosomal subunit protein uL5 (180 aa).

The protein belongs to the universal ribosomal protein uL5 family. As to quaternary structure, part of the 50S ribosomal subunit; part of the 5S rRNA/L5/L18/L25 subcomplex. Contacts the 5S rRNA and the P site tRNA. Forms a bridge to the 30S subunit in the 70S ribosome.

Functionally, this is one of the proteins that bind and probably mediate the attachment of the 5S RNA into the large ribosomal subunit, where it forms part of the central protuberance. In the 70S ribosome it contacts protein S13 of the 30S subunit (bridge B1b), connecting the 2 subunits; this bridge is implicated in subunit movement. Contacts the P site tRNA; the 5S rRNA and some of its associated proteins might help stabilize positioning of ribosome-bound tRNAs. The chain is Large ribosomal subunit protein uL5 from Streptococcus sanguinis (strain SK36).